The primary structure comprises 816 residues: Probable E3 ubiquitin-protein ligase hulA (816 aa).

One can recognise a C2 domain in the interval 1–112 (MGSNLPAQPN…QMGGDEMLTR (112 aa)). Disordered stretches follow at residues 134 to 238 (NLST…GWER) and 254 to 354 (RTTT…YFVD). Residues 160–178 (VPQVAPSSSHPAASGAAPV) are compositionally biased toward low complexity. The segment covering 181 to 192 (SASNPSLNPQRV) has biased composition (polar residues). Low complexity predominate over residues 193 to 213 (PSTTRPSSTAAPASAAGAAAS). Composition is skewed to polar residues over residues 214–227 (NTHG…SFED) and 254–267 (RTTT…NYNE). The 34-residue stretch at 230 to 263 (GRLPAGWERREDNLGRTYYVDHNTRTTTWTRPSS) folds into the WW 1 domain. Positions 268–295 (HAQRSQREANMQLERRAHQSRMLPEDRT) are enriched in basic and acidic residues. Residues 296–310 (GANSPNLPESSQQAH) are compositionally biased toward polar residues. Positions 325–334 (ATGATTAGTG) are enriched in low complexity. WW domains lie at 334-367 (GELP…DPRR) and 394-427 (GPLP…DPRL). Residues 483–816 (SASDLKKRLM…VEETLGFGQE (334 aa)) form the HECT domain. Residue cysteine 784 is the Glycyl thioester intermediate of the active site.

This sequence belongs to the RSP5/NEDD4 family. In terms of assembly, interacts with creD.

The protein localises to the cytoplasm. It carries out the reaction S-ubiquitinyl-[E2 ubiquitin-conjugating enzyme]-L-cysteine + [acceptor protein]-L-lysine = [E2 ubiquitin-conjugating enzyme]-L-cysteine + N(6)-ubiquitinyl-[acceptor protein]-L-lysine.. It participates in protein modification; protein ubiquitination. Its function is as follows. E3 ubiquitin-protein ligase which accepts ubiquitin from an E2 ubiquitin-conjugating enzyme in the form of a thioester and then directly transfers the ubiquitin to targeted substrates. Probably involved in the regulatory network controlling carbon source utilization. In Neosartorya fischeri (strain ATCC 1020 / DSM 3700 / CBS 544.65 / FGSC A1164 / JCM 1740 / NRRL 181 / WB 181) (Aspergillus fischerianus), this protein is Probable E3 ubiquitin-protein ligase hulA (hulA).